The following is a 302-amino-acid chain: Ribonucleoside-diphosphate reductase small subunit (302 aa).

Residues Glu-61, Glu-91, and His-94 each contribute to the Fe cation site. Residue Tyr-98 is part of the active site. Residues 147–167 traverse the membrane as a helical segment; sequence ILVFLLIEGIFFISSFYSIAL. Glu-154, Glu-188, and His-191 together coordinate Fe cation.

The protein belongs to the ribonucleoside diphosphate reductase small chain family. Heterotetramer composed of a homodimer of the large subunit (R1) and a homodimer of the small subunit (R2). Larger multisubunit protein complex are also active, composed of (R1)n(R2)n. It depends on Fe cation as a cofactor.

It localises to the host membrane. The catalysed reaction is a 2'-deoxyribonucleoside 5'-diphosphate + [thioredoxin]-disulfide + H2O = a ribonucleoside 5'-diphosphate + [thioredoxin]-dithiol. Its function is as follows. Ribonucleoside-diphosphate reductase holoenzyme provides the precursors necessary for viral DNA synthesis. Allows virus growth in non-dividing cells, as well as reactivation from latency in infected hosts. Catalyzes the biosynthesis of deoxyribonucleotides from the corresponding ribonucleotides. The polypeptide is Ribonucleoside-diphosphate reductase small subunit (Homo sapiens (Human)).